The chain runs to 687 residues: Putative lipase YDR444W (687 aa).

The active-site Charge relay system is the Ser284. Disordered regions lie at residues 429–472, 491–513, and 650–687; these read IRKK…AESP, KINKYKRGQTNEANSDSDNEQGV, and ELAEDANEPKDEPNQSSQADRSNEYNEGEISKGAENAT. Over residues 436-463 the composition is skewed to low complexity; that stretch reads SPTSSEFVSSDSPESSGASSPSNENGNN. The segment covering 670–681 has biased composition (basic and acidic residues); that stretch reads RSNEYNEGEISK.

The protein belongs to the putative lipase ROG1 family.

The protein localises to the cytoplasm. This Saccharomyces cerevisiae (strain ATCC 204508 / S288c) (Baker's yeast) protein is Putative lipase YDR444W.